A 130-amino-acid chain; its full sequence is Blasticidin-S deaminase (130 aa).

Residues 1-129 (MPLSQEESTL…ELLPSGYVWE (129 aa)) form the CMP/dCMP-type deaminase domain. A substrate-binding site is contributed by S28. Residue C54 participates in Zn(2+) binding. Residue E56 is the Proton donor of the active site. A substrate-binding site is contributed by R82. Residues C88 and C91 each contribute to the Zn(2+) site. Residues Y126 and W128 each contribute to the substrate site.

This sequence belongs to the cytidine and deoxycytidylate deaminase family. In terms of assembly, homotetramer. It depends on Zn(2+) as a cofactor.

The catalysed reaction is blasticidin S + H2O + H(+) = deaminohydroxyblasticidin S + NH4(+). Functionally, catalyzes the deamination of the cytosine moiety of the antibiotics blasticidin S, cytomycin and acetylblasticidin S. The sequence is that of Blasticidin-S deaminase (bsd) from Aspergillus terreus.